A 158-amino-acid polypeptide reads, in one-letter code: 6,7-dimethyl-8-ribityllumazine synthase (158 aa).

5-amino-6-(D-ribitylamino)uracil is bound by residues Phe22, 57-59 (AVE), and 81-83 (AVI). 86–87 (GT) provides a ligand contact to (2S)-2-hydroxy-3-oxobutyl phosphate. His89 acts as the Proton donor in catalysis. Residue Phe114 participates in 5-amino-6-(D-ribitylamino)uracil binding. Arg128 lines the (2S)-2-hydroxy-3-oxobutyl phosphate pocket.

It belongs to the DMRL synthase family. In terms of assembly, forms an icosahedral capsid composed of 60 subunits, arranged as a dodecamer of pentamers.

The enzyme catalyses (2S)-2-hydroxy-3-oxobutyl phosphate + 5-amino-6-(D-ribitylamino)uracil = 6,7-dimethyl-8-(1-D-ribityl)lumazine + phosphate + 2 H2O + H(+). The protein operates within cofactor biosynthesis; riboflavin biosynthesis; riboflavin from 2-hydroxy-3-oxobutyl phosphate and 5-amino-6-(D-ribitylamino)uracil: step 1/2. Catalyzes the formation of 6,7-dimethyl-8-ribityllumazine by condensation of 5-amino-6-(D-ribitylamino)uracil with 3,4-dihydroxy-2-butanone 4-phosphate. This is the penultimate step in the biosynthesis of riboflavin. The polypeptide is 6,7-dimethyl-8-ribityllumazine synthase (Shewanella loihica (strain ATCC BAA-1088 / PV-4)).